The sequence spans 464 residues: Serine/threonine-protein kinase 38-like (464 aa).

The residue at position 2 (A2) is an N-acetylalanine. The S100B binding stretch occupies residues 63–88 (KKLRRSQHARKETEFLRLKRTRLGLD). T75 carries the post-translational modification Phosphothreonine. Residues 90–383 (FESLKVIGRG…VEEIKGHPFF (294 aa)) form the Protein kinase domain. ATP-binding positions include 96–104 (IGRGAFGEV) and K119. The active-site Proton acceptor is the D213. Position 282 is a phosphoserine; by autocatalysis (S282). The 70-residue stretch at 384 to 453 (EGVDWEHIRE…KRFEGLTQRG (70 aa)) folds into the AGC-kinase C-terminal domain. T442 is modified (phosphothreonine; by STK24/MST3).

This sequence belongs to the protein kinase superfamily. AGC Ser/Thr protein kinase family. In terms of assembly, homodimeric S100B binds two molecules of STK38L. Interacts with MICAL1; leading to inhibit the protein kinase activity by antagonizing activation by MST1/STK4. Interacts with MOB1 and MOB2. Requires Mg(2+) as cofactor. In terms of tissue distribution, ubiquitously expressed with highest levels observed in the thymus.

It is found in the cytoplasm. It localises to the cytoskeleton. Its subcellular location is the membrane. It catalyses the reaction L-seryl-[protein] + ATP = O-phospho-L-seryl-[protein] + ADP + H(+). It carries out the reaction L-threonyl-[protein] + ATP = O-phospho-L-threonyl-[protein] + ADP + H(+). Activated by binding of S100B which releases autoinhibitory N-lobe interactions, enabling ATP to bind and the autophosphorylation of Ser-282. Thr-442 then undergoes calcium-dependent phosphorylation by STK24/MST3. Interactions between phosphorylated Thr-442 and the N-lobe promote additional structural changes that complete the activation of the kinase. Autoinhibition is also released by the binding of MOB1/MOBKL1A and MOB2/HCCA2 to the N-terminal of STK38L. Its function is as follows. Involved in the regulation of structural processes in differentiating and mature neuronal cells. This chain is Serine/threonine-protein kinase 38-like, found in Homo sapiens (Human).